A 95-amino-acid polypeptide reads, in one-letter code: MNIRPLGDRVVIKRVEAEETTKSGIVLPGAAKEKPQVAEVIAVGPGGLVDGKEVKMELKVGDKVLFSKYAGNEVKIEGEEVTILKQDDILAVVEG.

The protein belongs to the GroES chaperonin family. In terms of assembly, heptamer of 7 subunits arranged in a ring. Interacts with the chaperonin GroEL.

It localises to the cytoplasm. Functionally, together with the chaperonin GroEL, plays an essential role in assisting protein folding. The GroEL-GroES system forms a nano-cage that allows encapsulation of the non-native substrate proteins and provides a physical environment optimized to promote and accelerate protein folding. GroES binds to the apical surface of the GroEL ring, thereby capping the opening of the GroEL channel. This is Co-chaperonin GroES from Clostridium botulinum (strain ATCC 19397 / Type A).